The primary structure comprises 135 residues: Nucleoside diphosphate kinase (135 aa).

ATP contacts are provided by Lys-10, Phe-58, Arg-86, Thr-92, Arg-103, and Asn-113. The active-site Pros-phosphohistidine intermediate is the His-116.

This sequence belongs to the NDK family. Homotetramer. The cofactor is Mg(2+).

Its subcellular location is the cytoplasm. The enzyme catalyses a 2'-deoxyribonucleoside 5'-diphosphate + ATP = a 2'-deoxyribonucleoside 5'-triphosphate + ADP. It catalyses the reaction a ribonucleoside 5'-diphosphate + ATP = a ribonucleoside 5'-triphosphate + ADP. Major role in the synthesis of nucleoside triphosphates other than ATP. The ATP gamma phosphate is transferred to the NDP beta phosphate via a ping-pong mechanism, using a phosphorylated active-site intermediate. The polypeptide is Nucleoside diphosphate kinase (Nocardioides sp. (strain ATCC BAA-499 / JS614)).